Reading from the N-terminus, the 112-residue chain is Ig kappa chain V-III region TEPC 124 (112 aa).

The framework-1 stretch occupies residues 1–23; the sequence is DIVLTQSPASLAVSLGQRATISC. Cysteines 23 and 92 form a disulfide. The tract at residues 24–38 is complementarity-determining-1; sequence RASZSVNWYGNSFMZ. The interval 39–53 is framework-2; the sequence is WYZZKPGZPPKLLIY. The segment at 54–60 is complementarity-determining-2; that stretch reads RASNLZS. The tract at residues 61–92 is framework-3; that stretch reads GIPARFSGSGSRTBFTLTIBPVZABDVATYFC. The tract at residues 93–101 is complementarity-determining-3; that stretch reads ZZSBZAPWT. Residues 102–111 form a framework-4 region; the sequence is FGSGTKLEIK.

The polypeptide is Ig kappa chain V-III region TEPC 124 (Mus musculus (Mouse)).